The sequence spans 259 residues: DNA repair protein RecO (259 aa).

The protein belongs to the RecO family.

Its function is as follows. Involved in DNA repair and RecF pathway recombination. In Leuconostoc mesenteroides subsp. mesenteroides (strain ATCC 8293 / DSM 20343 / BCRC 11652 / CCM 1803 / JCM 6124 / NCDO 523 / NBRC 100496 / NCIMB 8023 / NCTC 12954 / NRRL B-1118 / 37Y), this protein is DNA repair protein RecO.